A 96-amino-acid polypeptide reads, in one-letter code: Nucleoid-associated protein CCA_00330 (96 aa).

It belongs to the YbaB/EbfC family. In terms of assembly, homodimer.

The protein resides in the cytoplasm. It localises to the nucleoid. In terms of biological role, binds to DNA and alters its conformation. May be involved in regulation of gene expression, nucleoid organization and DNA protection. The protein is Nucleoid-associated protein CCA_00330 of Chlamydia caviae (strain ATCC VR-813 / DSM 19441 / 03DC25 / GPIC) (Chlamydophila caviae).